The primary structure comprises 384 residues: Probable protein phosphatase 2C 48 (384 aa).

The region spanning I47–L358 is the PPM-type phosphatase domain. S78 is modified (phosphoserine). Positions 89, 90, 290, and 349 each coordinate Mn(2+).

It belongs to the PP2C family. Mg(2+) is required as a cofactor. The cofactor is Mn(2+).

The enzyme catalyses O-phospho-L-seryl-[protein] + H2O = L-seryl-[protein] + phosphate. The catalysed reaction is O-phospho-L-threonyl-[protein] + H2O = L-threonyl-[protein] + phosphate. Its function is as follows. May dephosphorylate and repress plasma membrane H(+)-ATPases (PM H(+)-ATPases, e.g. AHA1 and AHA2), thus influencing negatively plant growth and fitness. The chain is Probable protein phosphatase 2C 48 from Arabidopsis thaliana (Mouse-ear cress).